A 242-amino-acid polypeptide reads, in one-letter code: Ribonuclease PH (242 aa).

Phosphate contacts are provided by residues Arg-86 and 124-126 (GTR).

Belongs to the RNase PH family. In terms of assembly, homohexameric ring arranged as a trimer of dimers.

The enzyme catalyses tRNA(n+1) + phosphate = tRNA(n) + a ribonucleoside 5'-diphosphate. Functionally, phosphorolytic 3'-5' exoribonuclease that plays an important role in tRNA 3'-end maturation. Removes nucleotide residues following the 3'-CCA terminus of tRNAs; can also add nucleotides to the ends of RNA molecules by using nucleoside diphosphates as substrates, but this may not be physiologically important. Probably plays a role in initiation of 16S rRNA degradation (leading to ribosome degradation) during starvation. The sequence is that of Ribonuclease PH from Bacillus pumilus (strain SAFR-032).